The following is a 538-amino-acid chain: L-aspartate oxidase (538 aa).

Residues 14-17, lysine 36, 43-50, and aspartate 223 contribute to the FAD site; these read SGAA and STYWAQGG. Arginine 290 (proton donor/acceptor) is an active-site residue. FAD-binding positions include glutamate 375 and 391–392; that span reads SL.

It belongs to the FAD-dependent oxidoreductase 2 family. NadB subfamily. It depends on FAD as a cofactor.

The protein localises to the cytoplasm. It catalyses the reaction L-aspartate + O2 = iminosuccinate + H2O2. It functions in the pathway cofactor biosynthesis; NAD(+) biosynthesis; iminoaspartate from L-aspartate (oxidase route): step 1/1. Catalyzes the oxidation of L-aspartate to iminoaspartate, the first step in the de novo biosynthesis of NAD(+). This Pseudomonas aeruginosa (strain ATCC 15692 / DSM 22644 / CIP 104116 / JCM 14847 / LMG 12228 / 1C / PRS 101 / PAO1) protein is L-aspartate oxidase (nadB).